The sequence spans 110 residues: Large ribosomal subunit protein uL22 (110 aa).

Belongs to the universal ribosomal protein uL22 family. In terms of assembly, part of the 50S ribosomal subunit.

This protein binds specifically to 23S rRNA; its binding is stimulated by other ribosomal proteins, e.g. L4, L17, and L20. It is important during the early stages of 50S assembly. It makes multiple contacts with different domains of the 23S rRNA in the assembled 50S subunit and ribosome. Its function is as follows. The globular domain of the protein is located near the polypeptide exit tunnel on the outside of the subunit, while an extended beta-hairpin is found that lines the wall of the exit tunnel in the center of the 70S ribosome. The sequence is that of Large ribosomal subunit protein uL22 from Pectobacterium atrosepticum (strain SCRI 1043 / ATCC BAA-672) (Erwinia carotovora subsp. atroseptica).